The sequence spans 75 residues: Pi-hexatoxin-Hi1a (75 aa).

Cystine bridges form between Cys-3-Cys-18, Cys-10-Cys-23, Cys-17-Cys-33, Cys-40-Cys-55, Cys-47-Cys-60, and Cys-54-Cys-71. 2 Domain repeats span residues 3–33 (CIRK…FEVC) and 40–71 (CLVK…SSVC). The segment at 3–71 (CIRKWLSCVD…KRSGNKSSVC (69 aa)) is 2 X approximate repeats with cysteine pattern C-C-CC-C-C.

It belongs to the psalmotoxin-1 family. Double-knot toxin subfamily. Expressed by the venom gland.

It is found in the secreted. Functionally, this toxin potently and selectively inhibits ASIC1a (IC(50)=0.4 nM on rASIC1a and IC(50)=0.52 nM on hASIC1a), an isoform of the gene ASIC1. It incompletely inhibits ASIC1a activation in a pH-independent and slowly reversible manner (Tau(off)=14.2 minutes for rASIC1a and 31.8 minutes for hASIC1a). This toxin acts by binding to and stabilizing the closed state of the channel, thereby impeding the transition into a conducting state. This toxin may bind to the acidic pocket of ASIC1a, since mutation of a key residue of this pocket (Arg-350) abolishes the ability of the toxin to inhibit ASIC1a. In addition, it shows antiparasitic activities, since it moderately inhibits the larval development of the major pathogenic nematode of ruminants (H.contortus, IC(50)=22.9 uM). In vivo, this toxin protects the brain from neuronal injury when administered up to 8 hours after stroke onset. This Hadronyche infensa (Fraser island funnel-web spider) protein is Pi-hexatoxin-Hi1a.